The primary structure comprises 565 residues: MELEHESKRPLYIPYSGPILLEFPLLNKGSAFTEEERRNFNLHGLLPEAVETIEEQAERAYRQYLDFKNDADKHIYLRNIQDTNETLFYRLLDAHLNEMMPIIYTPTVGEACEHFSDIYRRARGLFISHPNKAHIDDMLQNATKQNVKVIVVTDGERILGLGDQGIGGMGIPIGKLSLYTSCGGISPAYTLPVVLDVGTNNPQRLNDPLYMGWRHPRITGKEYDEFVDEFIQAVKRRWPNVLLQFEDFAQKNAMPLLNRYRHEICCFNDDIQGTAAVTLGSLIAASRAAGRQLKDQTVTFLGAGSAGCGIAEQIVAQMKSEGLSDEQARARIFMVDRFGLLTDKLPNLLDFQNKLVQKSSSLAKWDVNNDSISLLDVVRNAKPTVLIGVSGQAGLFTEEIIREMHKHCERPIVMPLSNPTSRVEARPEDIINWTDGAALVATGSPFNPVKYKDQEYPIAQCNNAYIFPGIGLGVIASGAKLVTDGMLMAASRTLANCSPLAQEGQGPLLPLIDDIQEVSRKIAKQVAKEAQIQGVATVTSDGALDEAIERNFWKPEYRVYKRTSF.

Tyrosine 104 acts as the Proton donor in catalysis. Position 157 (arginine 157) interacts with NAD(+). The active-site Proton acceptor is lysine 175. 3 residues coordinate a divalent metal cation: glutamate 246, aspartate 247, and aspartate 270. The NAD(+) site is built by aspartate 270 and asparagine 418.

The protein belongs to the malic enzymes family. In terms of assembly, homotetramer. Mg(2+) serves as cofactor. It depends on Mn(2+) as a cofactor.

It carries out the reaction (S)-malate + NAD(+) = pyruvate + CO2 + NADH. The catalysed reaction is oxaloacetate + H(+) = pyruvate + CO2. The polypeptide is NAD-dependent malic enzyme (Photorhabdus laumondii subsp. laumondii (strain DSM 15139 / CIP 105565 / TT01) (Photorhabdus luminescens subsp. laumondii)).